A 432-amino-acid chain; its full sequence is D-amino acid dehydrogenase (432 aa).

An FAD-binding site is contributed by Val3–Trp17.

It belongs to the DadA oxidoreductase family. FAD is required as a cofactor.

The enzyme catalyses a D-alpha-amino acid + A + H2O = a 2-oxocarboxylate + AH2 + NH4(+). It functions in the pathway amino-acid degradation; D-alanine degradation; NH(3) and pyruvate from D-alanine: step 1/1. In terms of biological role, oxidative deamination of D-amino acids. The chain is D-amino acid dehydrogenase from Shigella sonnei (strain Ss046).